Reading from the N-terminus, the 931-residue chain is Phosphoenolpyruvate carboxylase (931 aa).

Active-site residues include H138 and K594.

This sequence belongs to the PEPCase type 1 family. The cofactor is Mg(2+).

The catalysed reaction is oxaloacetate + phosphate = phosphoenolpyruvate + hydrogencarbonate. Its function is as follows. Forms oxaloacetate, a four-carbon dicarboxylic acid source for the tricarboxylic acid cycle. In Streptococcus agalactiae serotype Ia (strain ATCC 27591 / A909 / CDC SS700), this protein is Phosphoenolpyruvate carboxylase.